A 355-amino-acid polypeptide reads, in one-letter code: Protein pelota homolog (355 aa).

This sequence belongs to the eukaryotic release factor 1 family. Pelota subfamily. As to quaternary structure, monomer. It depends on a divalent metal cation as a cofactor.

It localises to the cytoplasm. In terms of biological role, may function in recognizing stalled ribosomes, interact with stem-loop structures in stalled mRNA molecules, and effect endonucleolytic cleavage of the mRNA. May play a role in the release non-functional ribosomes and degradation of damaged mRNAs. Has endoribonuclease activity. The polypeptide is Protein pelota homolog (Natronomonas pharaonis (strain ATCC 35678 / DSM 2160 / CIP 103997 / JCM 8858 / NBRC 14720 / NCIMB 2260 / Gabara) (Halobacterium pharaonis)).